Consider the following 108-residue polypeptide: Thiosulfate sulfurtransferase GlpE (108 aa).

The region spanning 17–105 (QEKEAVLVDI…WQRQFPAEVA (89 aa)) is the Rhodanese domain. C65 acts as the Cysteine persulfide intermediate in catalysis.

The protein belongs to the GlpE family.

The protein localises to the cytoplasm. The catalysed reaction is thiosulfate + hydrogen cyanide = thiocyanate + sulfite + 2 H(+). It catalyses the reaction thiosulfate + [thioredoxin]-dithiol = [thioredoxin]-disulfide + hydrogen sulfide + sulfite + 2 H(+). Transferase that catalyzes the transfer of sulfur from thiosulfate to thiophilic acceptors such as cyanide or dithiols. May function in a CysM-independent thiosulfate assimilation pathway by catalyzing the conversion of thiosulfate to sulfite, which can then be used for L-cysteine biosynthesis. In Escherichia coli O157:H7, this protein is Thiosulfate sulfurtransferase GlpE.